A 394-amino-acid chain; its full sequence is uncharacterized protein (394 aa).

A run of 2 helical transmembrane segments spans residues 31 to 51 and 57 to 77; these read LAILSLFLGIAACILIALSGL and LIIALSLISIIVLSTGISLLI.

The protein belongs to the chlamydial CPn_0129/CT_036/TC_0306 family.

The protein localises to the cell membrane. This is an uncharacterized protein from Chlamydia pneumoniae (Chlamydophila pneumoniae).